A 132-amino-acid chain; its full sequence is Fatty acid-binding protein, intestinal (132 aa).

The residue at position 2 (alanine 2) is an N-acetylalanine. The hexadecanoate site is built by tryptophan 83 and arginine 107. Tetradecanoate is bound by residues tryptophan 83 and arginine 107.

It belongs to the calycin superfamily. Fatty-acid binding protein (FABP) family.

It is found in the cytoplasm. Its function is as follows. FABPs are thought to play a role in the intracellular transport of long-chain fatty acids and their acyl-CoA esters. This is Fatty acid-binding protein, intestinal (fabp2) from Xenopus laevis (African clawed frog).